The primary structure comprises 343 residues: Holliday junction branch migration complex subunit RuvB (343 aa).

A large ATPase domain (RuvB-L) region spans residues 1 to 186 (MTEEFDIRQE…FGINLHLEYY (186 aa)). Residues Leu-25, Arg-26, Gly-67, Lys-70, Thr-71, Thr-72, 133–135 (EDY), Arg-176, Tyr-186, and Arg-223 each bind ATP. A Mg(2+)-binding site is contributed by Thr-71. The segment at 187 to 257 (DVHTITGIVE…IACYALEALN (71 aa)) is small ATPAse domain (RuvB-S). Residues 260–343 (RYGLDNVDHK…PRPHRPSLFD (84 aa)) are head domain (RuvB-H). DNA is bound by residues Arg-315 and Arg-320.

Belongs to the RuvB family. In terms of assembly, homohexamer. Forms an RuvA(8)-RuvB(12)-Holliday junction (HJ) complex. HJ DNA is sandwiched between 2 RuvA tetramers; dsDNA enters through RuvA and exits via RuvB. An RuvB hexamer assembles on each DNA strand where it exits the tetramer. Each RuvB hexamer is contacted by two RuvA subunits (via domain III) on 2 adjacent RuvB subunits; this complex drives branch migration. In the full resolvosome a probable DNA-RuvA(4)-RuvB(12)-RuvC(2) complex forms which resolves the HJ.

It is found in the cytoplasm. The enzyme catalyses ATP + H2O = ADP + phosphate + H(+). In terms of biological role, the RuvA-RuvB-RuvC complex processes Holliday junction (HJ) DNA during genetic recombination and DNA repair, while the RuvA-RuvB complex plays an important role in the rescue of blocked DNA replication forks via replication fork reversal (RFR). RuvA specifically binds to HJ cruciform DNA, conferring on it an open structure. The RuvB hexamer acts as an ATP-dependent pump, pulling dsDNA into and through the RuvAB complex. RuvB forms 2 homohexamers on either side of HJ DNA bound by 1 or 2 RuvA tetramers; 4 subunits per hexamer contact DNA at a time. Coordinated motions by a converter formed by DNA-disengaged RuvB subunits stimulates ATP hydrolysis and nucleotide exchange. Immobilization of the converter enables RuvB to convert the ATP-contained energy into a lever motion, pulling 2 nucleotides of DNA out of the RuvA tetramer per ATP hydrolyzed, thus driving DNA branch migration. The RuvB motors rotate together with the DNA substrate, which together with the progressing nucleotide cycle form the mechanistic basis for DNA recombination by continuous HJ branch migration. Branch migration allows RuvC to scan DNA until it finds its consensus sequence, where it cleaves and resolves cruciform DNA. The sequence is that of Holliday junction branch migration complex subunit RuvB from Porphyromonas gingivalis (strain ATCC BAA-308 / W83).